The sequence spans 208 residues: ATP-dependent Clp protease proteolytic subunit 2 (208 aa).

The Nucleophile role is filled by Ser-102. The active site involves His-127.

Belongs to the peptidase S14 family. In terms of assembly, fourteen ClpP subunits assemble into 2 heptameric rings which stack back to back to give a disk-like structure with a central cavity, resembling the structure of eukaryotic proteasomes.

The protein localises to the cytoplasm. It catalyses the reaction Hydrolysis of proteins to small peptides in the presence of ATP and magnesium. alpha-casein is the usual test substrate. In the absence of ATP, only oligopeptides shorter than five residues are hydrolyzed (such as succinyl-Leu-Tyr-|-NHMec, and Leu-Tyr-Leu-|-Tyr-Trp, in which cleavage of the -Tyr-|-Leu- and -Tyr-|-Trp bonds also occurs).. In terms of biological role, cleaves peptides in various proteins in a process that requires ATP hydrolysis. Has a chymotrypsin-like activity. Plays a major role in the degradation of misfolded proteins. This is ATP-dependent Clp protease proteolytic subunit 2 from Chelativorans sp. (strain BNC1).